A 387-amino-acid polypeptide reads, in one-letter code: S-adenosylmethionine synthase (387 aa).

Residue His-16 participates in ATP binding. Asp-18 provides a ligand contact to Mg(2+). Glu-44 contributes to the K(+) binding site. Residues Glu-57 and Gln-100 each coordinate L-methionine. The interval 100 to 110 is flexible loop; sequence QSPDIAQGVDR. Residues 167–169, 232–233, Asp-241, 247–248, Ala-264, and Lys-268 each bind ATP; these read DAK, RF, and RK. Asp-241 provides a ligand contact to L-methionine. Lys-272 provides a ligand contact to L-methionine.

This sequence belongs to the AdoMet synthase family. Homotetramer; dimer of dimers. It depends on Mg(2+) as a cofactor. The cofactor is K(+).

Its subcellular location is the cytoplasm. The catalysed reaction is L-methionine + ATP + H2O = S-adenosyl-L-methionine + phosphate + diphosphate. It participates in amino-acid biosynthesis; S-adenosyl-L-methionine biosynthesis; S-adenosyl-L-methionine from L-methionine: step 1/1. Its function is as follows. Catalyzes the formation of S-adenosylmethionine (AdoMet) from methionine and ATP. The overall synthetic reaction is composed of two sequential steps, AdoMet formation and the subsequent tripolyphosphate hydrolysis which occurs prior to release of AdoMet from the enzyme. The polypeptide is S-adenosylmethionine synthase (Cupriavidus necator (strain ATCC 17699 / DSM 428 / KCTC 22496 / NCIMB 10442 / H16 / Stanier 337) (Ralstonia eutropha)).